Reading from the N-terminus, the 476-residue chain is Glycogen synthase (476 aa).

An ADP-alpha-D-glucose-binding site is contributed by Lys15.

Belongs to the glycosyltransferase 1 family. Bacterial/plant glycogen synthase subfamily.

The enzyme catalyses [(1-&gt;4)-alpha-D-glucosyl](n) + ADP-alpha-D-glucose = [(1-&gt;4)-alpha-D-glucosyl](n+1) + ADP + H(+). The protein operates within glycan biosynthesis; glycogen biosynthesis. Functionally, synthesizes alpha-1,4-glucan chains using ADP-glucose. This Streptococcus equi subsp. zooepidemicus (strain H70) protein is Glycogen synthase.